Reading from the N-terminus, the 338-residue chain is Phenylalanine--tRNA ligase alpha subunit (338 aa).

Glutamate 252 is a Mg(2+) binding site.

It belongs to the class-II aminoacyl-tRNA synthetase family. Phe-tRNA synthetase alpha subunit type 1 subfamily. In terms of assembly, tetramer of two alpha and two beta subunits. The cofactor is Mg(2+).

The protein resides in the cytoplasm. It carries out the reaction tRNA(Phe) + L-phenylalanine + ATP = L-phenylalanyl-tRNA(Phe) + AMP + diphosphate + H(+). This chain is Phenylalanine--tRNA ligase alpha subunit, found in Mycoplasmoides gallisepticum (strain R(low / passage 15 / clone 2)) (Mycoplasma gallisepticum).